Consider the following 1295-residue polypeptide: Phosphoribosylformylglycinamidine synthase (1295 aa).

Residues 305–327 (WPGAATGSGGEIRDEGATGRGAK) form a disordered region. ATP is bound by residues 307–318 (GAATGSGGEIRD), 386–388 (TGY), and Ala-678. Asp-679, Glu-718, Asn-722, and Asp-884 together coordinate Mg(2+). Ser-886 lines the ATP pocket. Residues 1041–1295 (KVAVLREQGG…IFRNARKQLG (255 aa)) enclose the Glutamine amidotransferase type-1 domain. The active-site Nucleophile is Cys-1135. Catalysis depends on residues His-1260 and Glu-1262.

This sequence in the N-terminal section; belongs to the FGAMS family. Monomer.

Its subcellular location is the cytoplasm. It catalyses the reaction N(2)-formyl-N(1)-(5-phospho-beta-D-ribosyl)glycinamide + L-glutamine + ATP + H2O = 2-formamido-N(1)-(5-O-phospho-beta-D-ribosyl)acetamidine + L-glutamate + ADP + phosphate + H(+). It participates in purine metabolism; IMP biosynthesis via de novo pathway; 5-amino-1-(5-phospho-D-ribosyl)imidazole from N(2)-formyl-N(1)-(5-phospho-D-ribosyl)glycinamide: step 1/2. Phosphoribosylformylglycinamidine synthase involved in the purines biosynthetic pathway. Catalyzes the ATP-dependent conversion of formylglycinamide ribonucleotide (FGAR) and glutamine to yield formylglycinamidine ribonucleotide (FGAM) and glutamate. The sequence is that of Phosphoribosylformylglycinamidine synthase from Salmonella choleraesuis (strain SC-B67).